The following is a 544-amino-acid chain: Chaperonin GroEL (544 aa).

ATP is bound by residues 29–32 (TMGP), Lys50, 86–90 (DGTTT), Gly414, 477–479 (NAA), and Asp493. Residues 525–544 (DKPAMPSMPDMGGMGMPGMM) form a disordered region.

Belongs to the chaperonin (HSP60) family. As to quaternary structure, forms a cylinder of 14 subunits composed of two heptameric rings stacked back-to-back. Interacts with the co-chaperonin GroES.

It is found in the cytoplasm. The catalysed reaction is ATP + H2O + a folded polypeptide = ADP + phosphate + an unfolded polypeptide.. In terms of biological role, together with its co-chaperonin GroES, plays an essential role in assisting protein folding. The GroEL-GroES system forms a nano-cage that allows encapsulation of the non-native substrate proteins and provides a physical environment optimized to promote and accelerate protein folding. In Aliarcobacter butzleri (strain RM4018) (Arcobacter butzleri), this protein is Chaperonin GroEL.